A 374-amino-acid chain; its full sequence is Chaperone protein DnaJ (374 aa).

The J domain maps to 5-70; sequence DYYEVLGLEK…DKKANYDRFG (66 aa). Residues 137–219 form a CR-type zinc finger; that stretch reads GVEKSINITR…CHGAGHVRKK (83 aa). Zn(2+)-binding residues include cysteine 150, cysteine 153, cysteine 167, cysteine 170, cysteine 193, cysteine 196, cysteine 207, and cysteine 210. CXXCXGXG motif repeat units lie at residues 150-157, 167-174, 193-200, and 207-214; these read CETCGGTG, CDKCGGTG, CDKCGGRG, and CHECHGAG.

The protein belongs to the DnaJ family. In terms of assembly, homodimer. It depends on Zn(2+) as a cofactor.

It is found in the cytoplasm. Participates actively in the response to hyperosmotic and heat shock by preventing the aggregation of stress-denatured proteins and by disaggregating proteins, also in an autonomous, DnaK-independent fashion. Unfolded proteins bind initially to DnaJ; upon interaction with the DnaJ-bound protein, DnaK hydrolyzes its bound ATP, resulting in the formation of a stable complex. GrpE releases ADP from DnaK; ATP binding to DnaK triggers the release of the substrate protein, thus completing the reaction cycle. Several rounds of ATP-dependent interactions between DnaJ, DnaK and GrpE are required for fully efficient folding. Also involved, together with DnaK and GrpE, in the DNA replication of plasmids through activation of initiation proteins. This Clostridium acetobutylicum (strain ATCC 824 / DSM 792 / JCM 1419 / IAM 19013 / LMG 5710 / NBRC 13948 / NRRL B-527 / VKM B-1787 / 2291 / W) protein is Chaperone protein DnaJ.